We begin with the raw amino-acid sequence, 186 residues long: Cell division protein SepF (186 aa).

Disordered regions lie at residues 14–59 and 157–186; these read EHDE…NETS and GRSQESNETSSSVSSDNFPTWGYETSRLAQ. The span at 16–27 shows a compositional bias: acidic residues; it reads DEYEEDYDEEME. Residues 159–171 show a composition bias toward low complexity; that stretch reads SQESNETSSSVSS.

It belongs to the SepF family. Homodimer. Interacts with FtsZ.

It is found in the cytoplasm. Its function is as follows. Cell division protein that is part of the divisome complex and is recruited early to the Z-ring. Probably stimulates Z-ring formation, perhaps through the cross-linking of FtsZ protofilaments. Its function overlaps with FtsA. The chain is Cell division protein SepF from Synechocystis sp. (strain ATCC 27184 / PCC 6803 / Kazusa).